Here is a 157-residue protein sequence, read N- to C-terminus: Protein Smg homolog (157 aa).

It belongs to the Smg family.

The chain is Protein Smg homolog from Shewanella woodyi (strain ATCC 51908 / MS32).